Here is a 371-residue protein sequence, read N- to C-terminus: Putative glutamate--cysteine ligase 2 (371 aa).

It belongs to the glutamate--cysteine ligase type 2 family. YbdK subfamily.

It catalyses the reaction L-cysteine + L-glutamate + ATP = gamma-L-glutamyl-L-cysteine + ADP + phosphate + H(+). In terms of biological role, ATP-dependent carboxylate-amine ligase which exhibits weak glutamate--cysteine ligase activity. In Cupriavidus taiwanensis (strain DSM 17343 / BCRC 17206 / CCUG 44338 / CIP 107171 / LMG 19424 / R1) (Ralstonia taiwanensis (strain LMG 19424)), this protein is Putative glutamate--cysteine ligase 2.